Reading from the N-terminus, the 1055-residue chain is Pre-mRNA-splicing factor ATP-dependent RNA helicase-like protein cdc28 (1055 aa).

Residues 67-78 (PREGSRPKENYN) show a composition bias toward basic and acidic residues. Residues 67–184 (PREGSRPKEN…TERLNDLRER (118 aa)) are disordered. Positions 112 to 121 (PLKKKSRSKT) are enriched in basic residues. Basic and acidic residues predominate over residues 122–132 (PKREIARRQRD). Positions 133-145 (EDEWESDEYEEVV) are enriched in acidic residues. Residues 163 to 184 (QNHDYEKSSDPETERLNDLRER) show a composition bias toward basic and acidic residues. The Helicase ATP-binding domain occupies 428-592 (LKAINEYQVL…FDEAPVFYVP (165 aa)). 441–448 (AETGSGKT) is a binding site for ATP. Positions 539 to 542 (DEAH) match the DEAH box motif. Residues 617–790 (TILQIHTTQP…NIVLLLKSLG (174 aa)) form the Helicase C-terminal domain.

Belongs to the DEAD box helicase family. DEAH subfamily. DDX16/PRP8 sub-subfamily.

The protein resides in the nucleus. The enzyme catalyses ATP + H2O = ADP + phosphate + H(+). Functionally, involved in pre-mRNA splicing. Is required together with ATP and at least one other factor, for the first cleavage-ligation reaction. Functions as a molecular motor in the activation of the precatalytic spliceosome for the first transesterification reaction of pre-mRNA splicing by hydrolyzing ATP to cause the activation of the spliceosome without the occurrence of splicing. In Schizosaccharomyces pombe (strain 972 / ATCC 24843) (Fission yeast), this protein is Pre-mRNA-splicing factor ATP-dependent RNA helicase-like protein cdc28 (cdc28).